Reading from the N-terminus, the 154-residue chain is Ribosome maturation factor RimP (154 aa).

This sequence belongs to the RimP family.

It is found in the cytoplasm. In terms of biological role, required for maturation of 30S ribosomal subunits. This is Ribosome maturation factor RimP from Yersinia pseudotuberculosis serotype O:1b (strain IP 31758).